The chain runs to 201 residues: 3-isopropylmalate dehydratase small subunit (201 aa).

This sequence belongs to the LeuD family. LeuD type 1 subfamily. Heterodimer of LeuC and LeuD.

It carries out the reaction (2R,3S)-3-isopropylmalate = (2S)-2-isopropylmalate. Its pathway is amino-acid biosynthesis; L-leucine biosynthesis; L-leucine from 3-methyl-2-oxobutanoate: step 2/4. Catalyzes the isomerization between 2-isopropylmalate and 3-isopropylmalate, via the formation of 2-isopropylmaleate. The chain is 3-isopropylmalate dehydratase small subunit from Salmonella schwarzengrund (strain CVM19633).